A 126-amino-acid chain; its full sequence is Large ribosomal subunit protein bL20 (126 aa).

The protein belongs to the bacterial ribosomal protein bL20 family.

Functionally, binds directly to 23S ribosomal RNA and is necessary for the in vitro assembly process of the 50S ribosomal subunit. It is not involved in the protein synthesizing functions of that subunit. The chain is Large ribosomal subunit protein bL20 from Parafrankia sp. (strain EAN1pec).